Here is a 180-residue protein sequence, read N- to C-terminus: Isopentenyl-diphosphate Delta-isomerase (180 aa).

Positions 29 and 36 each coordinate Mn(2+). The active site involves Cys-71. Position 73 (His-73) interacts with Mn(2+). Glu-91 contributes to the Mg(2+) binding site. Glu-118 and Glu-120 together coordinate Mn(2+). Glu-120 is a catalytic residue.

It belongs to the IPP isomerase type 1 family. Mg(2+) serves as cofactor. Requires Mn(2+) as cofactor.

It localises to the cytoplasm. The enzyme catalyses isopentenyl diphosphate = dimethylallyl diphosphate. The protein operates within isoprenoid biosynthesis; dimethylallyl diphosphate biosynthesis; dimethylallyl diphosphate from isopentenyl diphosphate: step 1/1. Functionally, catalyzes the 1,3-allylic rearrangement of the homoallylic substrate isopentenyl (IPP) to its highly electrophilic allylic isomer, dimethylallyl diphosphate (DMAPP). In Kocuria rhizophila (strain ATCC 9341 / DSM 348 / NBRC 103217 / DC2201), this protein is Isopentenyl-diphosphate Delta-isomerase.